Consider the following 169-residue polypeptide: Translationally-controlled tumor protein homolog (169 aa).

One can recognise a TCTP domain in the interval 1–169; sequence MIIYKDIVSG…FKDGLEEEKF (169 aa).

It belongs to the TCTP family.

The protein resides in the cytoplasm. Its function is as follows. Involved in calcium binding and microtubule stabilization. This Branchiostoma belcheri (Amphioxus) protein is Translationally-controlled tumor protein homolog.